Here is a 1589-residue protein sequence, read N- to C-terminus: Pentafunctional AROM polypeptide (1589 aa).

The 3-dehydroquinate synthase stretch occupies residues 1-384; sequence MAAPTTIKIL…HEQQASVVSN (384 aa). Residues 44-46, 81-84, 114-116, and Asp119 each bind NAD(+); these read DTT, ELSK, and GGV. Arg130 lines the 7-phospho-2-dehydro-3-deoxy-D-arabino-heptonate pocket. Position 139–140 (139–140) interacts with NAD(+); it reads TT. 7-phospho-2-dehydro-3-deoxy-D-arabino-heptonate contacts are provided by Asp146 and Lys152. NAD(+) is bound at residue Lys161. Position 162 (Asn162) interacts with 7-phospho-2-dehydro-3-deoxy-D-arabino-heptonate. NAD(+)-binding positions include 179-182 and Asn190; that span reads FLNT. Glu194 contributes to the Zn(2+) binding site. 7-phospho-2-dehydro-3-deoxy-D-arabino-heptonate is bound by residues 194–197 and Lys250; that span reads EVIK. Residue Glu260 is the Proton acceptor; for 3-dehydroquinate synthase activity of the active site. 7-phospho-2-dehydro-3-deoxy-D-arabino-heptonate is bound by residues 264-268 and His271; that span reads RNLLN. Position 271 (His271) interacts with Zn(2+). His275 functions as the Proton acceptor; for 3-dehydroquinate synthase activity in the catalytic mechanism. Positions 287 and 356 each coordinate 7-phospho-2-dehydro-3-deoxy-D-arabino-heptonate. Residue His287 participates in Zn(2+) binding. The segment at 397–841 is EPSP synthase; sequence VSPGVPKSLQ…WDTLAQLFKA (445 aa). Cys823 serves as the catalytic For EPSP synthase activity. Residues 861–1052 are shikimate kinase; that stretch reads ASIFIIGMRG…KKKPQSFFVS (192 aa). An ATP-binding site is contributed by 867–874; sequence GMRGAGKT. A 3-dehydroquinase region spans residues 1053–1273; it reads LTLPDLRPSA…AAPGQLSAQD (221 aa). The Proton acceptor; for 3-dehydroquinate dehydratase activity role is filled by His1176. Residue Lys1204 is the Schiff-base intermediate with substrate; for 3-dehydroquinate dehydratase activity of the active site. A shikimate dehydrogenase region spans residues 1286-1589; it reads PRKFAIFGKP…VMNPGTDNRG (304 aa).

The protein in the N-terminal section; belongs to the sugar phosphate cyclases superfamily. Dehydroquinate synthase family. This sequence in the 2nd section; belongs to the EPSP synthase family. In the 3rd section; belongs to the shikimate kinase family. It in the 4th section; belongs to the type-I 3-dehydroquinase family. The protein in the C-terminal section; belongs to the shikimate dehydrogenase family. Homodimer. The cofactor is Zn(2+).

The protein resides in the cytoplasm. The enzyme catalyses 7-phospho-2-dehydro-3-deoxy-D-arabino-heptonate = 3-dehydroquinate + phosphate. It catalyses the reaction 3-dehydroquinate = 3-dehydroshikimate + H2O. It carries out the reaction shikimate + NADP(+) = 3-dehydroshikimate + NADPH + H(+). The catalysed reaction is shikimate + ATP = 3-phosphoshikimate + ADP + H(+). The enzyme catalyses 3-phosphoshikimate + phosphoenolpyruvate = 5-O-(1-carboxyvinyl)-3-phosphoshikimate + phosphate. It functions in the pathway metabolic intermediate biosynthesis; chorismate biosynthesis; chorismate from D-erythrose 4-phosphate and phosphoenolpyruvate: step 2/7. It participates in metabolic intermediate biosynthesis; chorismate biosynthesis; chorismate from D-erythrose 4-phosphate and phosphoenolpyruvate: step 3/7. The protein operates within metabolic intermediate biosynthesis; chorismate biosynthesis; chorismate from D-erythrose 4-phosphate and phosphoenolpyruvate: step 4/7. Its pathway is metabolic intermediate biosynthesis; chorismate biosynthesis; chorismate from D-erythrose 4-phosphate and phosphoenolpyruvate: step 5/7. It functions in the pathway metabolic intermediate biosynthesis; chorismate biosynthesis; chorismate from D-erythrose 4-phosphate and phosphoenolpyruvate: step 6/7. The AROM polypeptide catalyzes 5 consecutive enzymatic reactions in prechorismate polyaromatic amino acid biosynthesis. The protein is Pentafunctional AROM polypeptide of Coccidioides posadasii (strain C735) (Valley fever fungus).